Here is a 484-residue protein sequence, read N- to C-terminus: Chromosomal replication initiator protein DnaA (484 aa).

The domain I, interacts with DnaA modulators stretch occupies residues 1-73 (MQEGKNIWSL…EILIEKGHST (73 aa)). Positions 73–140 (TINVEFIHSQ…EEIHIKYRNP (68 aa)) are domain II. The tract at residues 141 to 357 (FLKKKYTFEN…AAVTKLKAHI (217 aa)) is domain III, AAA+ region. ATP is bound by residues Gly185, Gly187, Lys188, and Thr189. The domain IV, binds dsDNA stretch occupies residues 358–484 (DLEDIEIDTN…IELMNKINKN (127 aa)).

Belongs to the DnaA family. As to quaternary structure, oligomerizes as a right-handed, spiral filament on DNA at oriC.

The protein resides in the cytoplasm. In terms of biological role, plays an essential role in the initiation and regulation of chromosomal replication. ATP-DnaA binds to the origin of replication (oriC) to initiate formation of the DNA replication initiation complex once per cell cycle. Binds the DnaA box (a 9 base pair repeat at the origin) and separates the double-stranded (ds)DNA. Forms a right-handed helical filament on oriC DNA; dsDNA binds to the exterior of the filament while single-stranded (ss)DNA is stabiized in the filament's interior. The ATP-DnaA-oriC complex binds and stabilizes one strand of the AT-rich DNA unwinding element (DUE), permitting loading of DNA polymerase. After initiation quickly degrades to an ADP-DnaA complex that is not apt for DNA replication. Binds acidic phospholipids. The sequence is that of Chromosomal replication initiator protein DnaA from Borrelia duttonii (strain Ly).